The following is a 583-amino-acid chain: uncharacterized protein (583 aa).

This is an uncharacterized protein from Schizosaccharomyces pombe (strain 972 / ATCC 24843) (Fission yeast).